The chain runs to 450 residues: Acyltransferase GLAUCE (450 aa).

Residues His171 and Glu394 each act as proton acceptor in the active site.

Belongs to the plant acyltransferase family. In terms of tissue distribution, restricted to the central cells of embryo sacs.

It is found in the cytoplasm. Its subcellular location is the nucleus. Its function is as follows. Required for double fertilization of the egg cell and the central cell by two sperm cells, resulting in the formation of the embryo and the endosperm. Involved in the regulation of embryonic expression of PHE1. Essential in maternal tissues to ensure the paternal embryonic expression of several genes, including RPS5a and FAC1, both of which being essential for early embryo and endosperm development in fertilized seeds. In Arabidopsis thaliana (Mouse-ear cress), this protein is Acyltransferase GLAUCE.